Reading from the N-terminus, the 351-residue chain is Inhibin beta C chain (351 aa).

An N-terminal signal peptide occupies residues 1–18 (MASSLLLALLFLTLATVV). Positions 19–236 (NLKTDGPCPA…EGKHRVRRRG (218 aa)) are excised as a propeptide. Asparagine 110, asparagine 142, and asparagine 160 each carry an N-linked (GlcNAc...) asparagine glycan. Disulfide bonds link cysteine 239–cysteine 247, cysteine 246–cysteine 316, cysteine 275–cysteine 348, and cysteine 279–cysteine 350.

It belongs to the TGF-beta family. As to quaternary structure, homodimeric or heterodimeric through association with alpha and beta subunits, linked by one or more disulfide bonds. Inhibins are heterodimers of one alpha and one beta subunit. Activins are homo- or heterodimers of beta subunits only.

The protein resides in the secreted. Its function is as follows. Inhibins and activins inhibit and activate, respectively, the secretion of follitropin by the pituitary gland. Inhibins/activins are involved in regulating a number of diverse functions such as hypothalamic and pituitary hormone secretion, gonadal hormone secretion, germ cell development and maturation, erythroid differentiation, insulin secretion, nerve cell survival, embryonic axial development or bone growth, depending on their subunit composition. Inhibins appear to oppose the functions of activins. This Rattus norvegicus (Rat) protein is Inhibin beta C chain (Inhbc).